Reading from the N-terminus, the 271-residue chain is Glutamate racemase (271 aa).

Residues 12–13 and 44–45 contribute to the substrate site; these read DS and YG. C75 acts as the Proton donor/acceptor in catalysis. 76 to 77 contacts substrate; the sequence is NT. Catalysis depends on C185, which acts as the Proton donor/acceptor. 186-187 provides a ligand contact to substrate; that stretch reads TH.

Belongs to the aspartate/glutamate racemases family.

It carries out the reaction L-glutamate = D-glutamate. Its pathway is cell wall biogenesis; peptidoglycan biosynthesis. Provides the (R)-glutamate required for cell wall biosynthesis. In Mycobacterium marinum (strain ATCC BAA-535 / M), this protein is Glutamate racemase.